The sequence spans 579 residues: Membrane protein insertase YidC (579 aa).

A helical membrane pass occupies residues 10–30 (LVIVTILSALILFGWSFVTKH). The disordered stretch occupies residues 35–61 (PPAPTQQGKNQPKAELTAEESGDKPLK). 5 helical membrane passes run 330 to 350 (FDKA…FYYL), 351 to 371 (DWLF…VFTI), 423 to 443 (VNPF…IALY), 478 to 498 (LLHF…ILGI), and 523 to 543 (PLIS…YYIF). Positions 560-572 (STPEERQDRAERK) are enriched in basic and acidic residues. The segment at 560 to 579 (STPEERQDRAERKRPSKKKA) is disordered.

Belongs to the OXA1/ALB3/YidC family. Type 1 subfamily. In terms of assembly, interacts with the Sec translocase complex via SecD. Specifically interacts with transmembrane segments of nascent integral membrane proteins during membrane integration.

The protein resides in the cell inner membrane. In terms of biological role, required for the insertion and/or proper folding and/or complex formation of integral membrane proteins into the membrane. Involved in integration of membrane proteins that insert both dependently and independently of the Sec translocase complex, as well as at least some lipoproteins. Aids folding of multispanning membrane proteins. This chain is Membrane protein insertase YidC, found in Zymomonas mobilis subsp. mobilis (strain ATCC 31821 / ZM4 / CP4).